The following is a 215-amino-acid chain: Ribonuclease T (215 aa).

The region spanning 21–195 (VVIDVETAGF…YDSKKTAELF (175 aa)) is the Exonuclease domain. The Mg(2+) site is built by Asp24, Glu26, His182, and Asp187. His182 (proton donor/acceptor) is an active-site residue.

This sequence belongs to the RNase T family. In terms of assembly, homodimer. It depends on Mg(2+) as a cofactor.

Functionally, trims short 3' overhangs of a variety of RNA species, leaving a one or two nucleotide 3' overhang. Responsible for the end-turnover of tRNA: specifically removes the terminal AMP residue from uncharged tRNA (tRNA-C-C-A). Also appears to be involved in tRNA biosynthesis. This Wigglesworthia glossinidia brevipalpis protein is Ribonuclease T.